Here is a 1058-residue protein sequence, read N- to C-terminus: Carbamoyl phosphate synthase pyrimidine-specific large chain (1058 aa).

Residues 1 to 401 (MPKRTDIHKI…ATLKAVRSLE (401 aa)) form a carboxyphosphate synthetic domain region. ATP is bound by residues R129, R169, G175, G176, Q208, I210, E215, G241, I242, H243, Q284, and E298. The ATP-grasp 1 domain occupies 133-327 (KALMEELGEP…IAKMAAKIAV (195 aa)). Residues Q284, E298, and N300 each coordinate Mg(2+). Residues Q284, E298, and N300 each contribute to the Mn(2+) site. The tract at residues 402 to 546 (IGVHHVEEPA…YGTYEFENES (145 aa)) is oligomerization domain. The carbamoyl phosphate synthetic domain stretch occupies residues 547–929 (IVTKRPSVLV…ALYKAFEAAK (383 aa)). The ATP-grasp 2 domain maps to 671–861 (DKVIKALAIP…MAQVATRAIL (191 aa)). ATP contacts are provided by R707, S746, L748, E752, G777, V778, H779, S780, Q820, and E832. Mg(2+)-binding residues include Q820, E832, and N834. Positions 820, 832, and 834 each coordinate Mn(2+). Residues 930-1058 (LHVPSHGNVL…ESQSFVTQAL (129 aa)) enclose the MGS-like domain. The segment at 930 to 1058 (LHVPSHGNVL…ESQSFVTQAL (129 aa)) is allosteric domain.

The protein belongs to the CarB family. Composed of two chains; the small (or glutamine) chain promotes the hydrolysis of glutamine to ammonia, which is used by the large (or ammonia) chain to synthesize carbamoyl phosphate. Tetramer of heterodimers (alpha,beta)4. Requires Mg(2+) as cofactor. Mn(2+) serves as cofactor.

It catalyses the reaction hydrogencarbonate + L-glutamine + 2 ATP + H2O = carbamoyl phosphate + L-glutamate + 2 ADP + phosphate + 2 H(+). The catalysed reaction is hydrogencarbonate + NH4(+) + 2 ATP = carbamoyl phosphate + 2 ADP + phosphate + 2 H(+). The protein operates within amino-acid biosynthesis; L-arginine biosynthesis; carbamoyl phosphate from bicarbonate: step 1/1. It functions in the pathway pyrimidine metabolism; UMP biosynthesis via de novo pathway; (S)-dihydroorotate from bicarbonate: step 1/3. In terms of biological role, small subunit of the glutamine-dependent carbamoyl phosphate synthetase (CPSase). CPSase catalyzes the formation of carbamoyl phosphate from the ammonia moiety of glutamine, carbonate, and phosphate donated by ATP, constituting the first step of the biosynthetic pathway leading to pyrimidine nucleotides. The large subunit (synthetase) binds the substrates ammonia (free or transferred from glutamine from the small subunit), hydrogencarbonate and ATP and carries out an ATP-coupled ligase reaction, activating hydrogencarbonate by forming carboxy phosphate which reacts with ammonia to form carbamoyl phosphate. This chain is Carbamoyl phosphate synthase pyrimidine-specific large chain (pyrAB), found in Lactiplantibacillus plantarum (strain ATCC BAA-793 / NCIMB 8826 / WCFS1) (Lactobacillus plantarum).